Here is a 234-residue protein sequence, read N- to C-terminus: Uridylate kinase (234 aa).

An ATP-binding site is contributed by Gly9–Ser10. Position 43 (Gly43) interacts with UMP. ATP-binding residues include Gly44 and Arg48. Residues Asp65 and Val113–Thr119 each bind UMP. ATP is bound by residues Thr139, Tyr145, and Asp148.

Belongs to the UMP kinase family. In terms of assembly, homohexamer.

It is found in the cytoplasm. The enzyme catalyses UMP + ATP = UDP + ADP. Its pathway is pyrimidine metabolism; CTP biosynthesis via de novo pathway; UDP from UMP (UMPK route): step 1/1. Inhibited by UTP. Catalyzes the reversible phosphorylation of UMP to UDP. This is Uridylate kinase from Methanococcoides burtonii (strain DSM 6242 / NBRC 107633 / OCM 468 / ACE-M).